Reading from the N-terminus, the 542-residue chain is DM7 family protein CG15333 (542 aa).

Belongs to the DM7 family.

This chain is DM7 family protein CG15333, found in Drosophila melanogaster (Fruit fly).